The following is a 378-amino-acid chain: Cytochrome b (378 aa).

4 helical membrane passes run 34–54 (FGSLLGLCLIIQILTGLFLAM), 78–99 (WLLRTLHANGASFFFICIYLHV), 114–134 (WLIGVIILFLVMGTAFMGYVL), and 179–199 (FFTFHFILPFIVLAMTMIHLL). 2 residues coordinate heme b: His-84 and His-98. Residues His-183 and His-197 each contribute to the heme b site. His-202 lines the a ubiquinone pocket. A run of 4 helical transmembrane segments spans residues 227 to 247 (FKDIVGFIVMIFILISLVLIS), 289 to 309 (LGGVIALVLSIAILMILPFYN), 321 to 341 (INQVMFWSMLVTVILLTWIGA), and 348 to 368 (YVLIGQILTVVYFLYYLVNPL).

It belongs to the cytochrome b family. As to quaternary structure, the main subunits of complex b-c1 are: cytochrome b, cytochrome c1 and the Rieske protein. Heme b is required as a cofactor.

The protein resides in the mitochondrion inner membrane. Component of the ubiquinol-cytochrome c reductase complex (complex III or cytochrome b-c1 complex) that is part of the mitochondrial respiratory chain. The b-c1 complex mediates electron transfer from ubiquinol to cytochrome c. Contributes to the generation of a proton gradient across the mitochondrial membrane that is then used for ATP synthesis. This is Cytochrome b (mt:Cyt-b) from Drosophila mauritiana (Fruit fly).